The sequence spans 461 residues: Serine/threonine-protein kinase ppk24, mitochondrial (461 aa).

Residues 120-416 form the Protein kinase domain; the sequence is FQHLKSIAKG…LDSILGTAWV (297 aa). Residues 126–134 and K153 contribute to the ATP site; that span reads IAKGATSTI. Catalysis depends on D256, which acts as the Proton acceptor.

This sequence belongs to the protein kinase superfamily. Ser/Thr protein kinase family.

Its subcellular location is the mitochondrion. The enzyme catalyses L-seryl-[protein] + ATP = O-phospho-L-seryl-[protein] + ADP + H(+). It catalyses the reaction L-threonyl-[protein] + ATP = O-phospho-L-threonyl-[protein] + ADP + H(+). Functionally, has a role late in meiosis. The chain is Serine/threonine-protein kinase ppk24, mitochondrial (ppk24) from Schizosaccharomyces pombe (strain 972 / ATCC 24843) (Fission yeast).